A 1829-amino-acid chain; its full sequence is Iron-regulated protein FrpC (1829 aa).

Hemolysin-type calcium-binding repeat units follow at residues 869–886, 887–904, 1015–1032, 1033–1050, 1051–1068, 1069–1086, 1087–1104, 1215–1232, 1233–1250, 1251–1268, 1269–1286, 1287–1304, 1415–1432, 1433–1450, 1451–1468, 1469–1486, 1487–1504, 1615–1632, 1633–1650, 1651–1668, 1669–1686, and 1687–1704; these read FGHN…NDTL, IGGA…SDTY, NGGL…DDLL, NGDA…NDTL, DGGE…NDAL, NGGE…NDTL, and NGGE…NDAL. Residues 1671–1690 form a disordered region; sequence GEGNDHLNGEDGNDTLIGGA.

It belongs to the RTX prokaryotic toxin (TC 1.C.11) family.

The protein resides in the cell outer membrane. It localises to the secreted. Its function is as follows. May participate in the pathogenesis of meningococcal disease. This Neisseria meningitidis serogroup B (strain ATCC BAA-335 / MC58) protein is Iron-regulated protein FrpC (frpC).